The following is a 244-amino-acid chain: MSFNLIVDQGNSACKVAFVRNNSIESISFLPGKAGQALSHLVAPHRFDKAIYSSVGLPDEEAEAIVRSCAAASLMMGTETPVPLRLQYDRRTLGADRLAAVVGAHSLYPNTELLVIDAGTAITYERVSAEGIYLGGNISPGLHLRFKALHLFTGRLPLIDPSGISPKIAEYGSSTEEAITAGVIHGLAGEIDRYIDDLHAKEGRSAVILTGGDANYLARIIRSGILIHPDLVLLGLNRILEYNV.

8-15 is a binding site for ATP; it reads DQGNSACK. Residues Y88 and 94–97 contribute to the substrate site; that span reads GADR. The active-site Proton acceptor is D96. A K(+)-binding site is contributed by D117. Residue T120 coordinates ATP. Residue T175 participates in substrate binding.

It belongs to the type III pantothenate kinase family. Homodimer. The cofactor is NH4(+). K(+) is required as a cofactor.

It localises to the cytoplasm. It catalyses the reaction (R)-pantothenate + ATP = (R)-4'-phosphopantothenate + ADP + H(+). It functions in the pathway cofactor biosynthesis; coenzyme A biosynthesis; CoA from (R)-pantothenate: step 1/5. Its function is as follows. Catalyzes the phosphorylation of pantothenate (Pan), the first step in CoA biosynthesis. The sequence is that of Type III pantothenate kinase from Porphyromonas gingivalis (strain ATCC BAA-308 / W83).